We begin with the raw amino-acid sequence, 377 residues long: Capsule polysaccharide export inner-membrane protein BexC (377 aa).

2 helical membrane-spanning segments follow: residues 23–43 and 351–371; these read LFGLTVLIPTAFSAVYFGLFA and IIATFIIGLMLYGVLNLLIAS.

This sequence belongs to the BexC/CtrB/KpsE family.

The protein resides in the cell inner membrane. May form an ATP-driven capsule polysaccharide export apparatus, in association with the BexA, BexB and BexD proteins. The chain is Capsule polysaccharide export inner-membrane protein BexC (bexC) from Haemophilus influenzae.